The primary structure comprises 339 residues: Phenylalanine--tRNA ligase alpha subunit (339 aa).

Glutamate 253 is a Mg(2+) binding site.

It belongs to the class-II aminoacyl-tRNA synthetase family. Phe-tRNA synthetase alpha subunit type 1 subfamily. Tetramer of two alpha and two beta subunits. Mg(2+) is required as a cofactor.

Its subcellular location is the cytoplasm. The catalysed reaction is tRNA(Phe) + L-phenylalanine + ATP = L-phenylalanyl-tRNA(Phe) + AMP + diphosphate + H(+). The polypeptide is Phenylalanine--tRNA ligase alpha subunit (Ruthia magnifica subsp. Calyptogena magnifica).